The sequence spans 422 residues: uncharacterized protein (422 aa).

A phosphoserine mark is found at Ser124, Ser126, and Ser151. Positions Thr144–Lys166 are disordered. Residue Lys250 forms a Glycyl lysine isopeptide (Lys-Gly) (interchain with G-Cter in SUMO2) linkage. 2 disordered regions span residues Ala251 to Ser285 and Gly299 to Ala324. Residues Glu271–Asn282 are compositionally biased toward acidic residues. Residues Ser280 and Ser306 each carry the phosphoserine modification. The segment covering Ala310–Ala324 has biased composition (low complexity). Phosphoserine is present on Ser351.

This is an uncharacterized protein from Homo sapiens (Human).